The chain runs to 319 residues: L-lactate dehydrogenase 2 (319 aa).

Residues valine 16, aspartate 37, lysine 42, tyrosine 68, and 82–83 (GA) each bind NAD(+). Substrate is bound by residues glutamine 85 and arginine 91. NAD(+)-binding positions include serine 104, 121-123 (AAN), and serine 146. Residue 123–126 (NPVD) participates in substrate binding. 151 to 154 (DSAR) provides a ligand contact to substrate. Catalysis depends on histidine 178, which acts as the Proton acceptor. Position 222 is a phosphotyrosine (tyrosine 222). Threonine 231 contacts substrate.

Belongs to the LDH/MDH superfamily. LDH family. Homotetramer.

It localises to the cytoplasm. It catalyses the reaction (S)-lactate + NAD(+) = pyruvate + NADH + H(+). It functions in the pathway fermentation; pyruvate fermentation to lactate; (S)-lactate from pyruvate: step 1/1. Functionally, catalyzes the conversion of lactate to pyruvate (Potential). Contributes to S.aureus growth during nitrosative stress in both aerobically and anaerobically cultured cells, despite playing a secondary role in this resistance mechanism. The sequence is that of L-lactate dehydrogenase 2 from Staphylococcus aureus (strain Mu3 / ATCC 700698).